A 630-amino-acid chain; its full sequence is Prolactin receptor (630 aa).

The signal sequence occupies residues methionine 1 to glycine 23. Topologically, residues threonine 24–glutamate 234 are extracellular. Fibronectin type-III domains lie at lysine 31–proline 128 and proline 130–tyrosine 230. Intrachain disulfides connect cysteine 37–cysteine 47 and cysteine 76–cysteine 87. N-linked (GlcNAc...) asparagine glycans are attached at residues asparagine 92 and asparagine 101. The Zn(2+) site is built by aspartate 212 and histidine 213. Positions tryptophan 216–serine 220 match the WSXWS motif motif. The helical transmembrane segment at lysine 235 to methionine 258 threads the bilayer. Residues asparagine 259 to threonine 630 are Cytoplasmic-facing. Positions methionine 267 to lysine 275 match the Box 1 motif motif. Residues lysine 339 to lysine 389 are disordered. A compositionally biased stretch (low complexity) spans serine 340–aspartate 357. Over residues glutamine 380–lysine 389 the composition is skewed to basic and acidic residues.

The protein belongs to the type I cytokine receptor family. Type 1 subfamily.

The protein localises to the membrane. Its function is as follows. This is a receptor for the anterior pituitary hormone prolactin. The polypeptide is Prolactin receptor (prlr) (Oreochromis niloticus (Nile tilapia)).